A 383-amino-acid polypeptide reads, in one-letter code: Acetylornithine deacetylase (383 aa).

Histidine 80 is a Zn(2+) binding site. Residue aspartate 82 is part of the active site. Aspartate 112 provides a ligand contact to Zn(2+). Glutamate 144 is a catalytic residue. Residues glutamate 145, glutamate 169, and histidine 355 each contribute to the Zn(2+) site.

The protein belongs to the peptidase M20A family. ArgE subfamily. As to quaternary structure, homodimer. Requires Zn(2+) as cofactor. Co(2+) serves as cofactor. The cofactor is glutathione.

It localises to the cytoplasm. The catalysed reaction is N(2)-acetyl-L-ornithine + H2O = L-ornithine + acetate. It participates in amino-acid biosynthesis; L-arginine biosynthesis; L-ornithine from N(2)-acetyl-L-ornithine (linear): step 1/1. Its function is as follows. Catalyzes the hydrolysis of the amide bond of N(2)-acetylated L-amino acids. Cleaves the acetyl group from N-acetyl-L-ornithine to form L-ornithine, an intermediate in L-arginine biosynthesis pathway, and a branchpoint in the synthesis of polyamines. In Salmonella agona (strain SL483), this protein is Acetylornithine deacetylase.